Consider the following 240-residue polypeptide: Cysteine-rich venom protein (240 aa).

A signal peptide spans 1-19 (MIAFIVLPILAAVLQQSSG). The SCP domain maps to 39-166 (DLHNSLRRSV…EYSYFYVCQY (128 aa)). Cystine bridges form between Cys-75–Cys-153, Cys-92–Cys-167, Cys-148–Cys-164, Cys-186–Cys-193, Cys-189–Cys-198, Cys-202–Cys-235, Cys-211–Cys-229, and Cys-220–Cys-233. The ShKT domain maps to 202–235 (CRQENKFTNCDSLVRQSSCQDNYMKTNCPASCFC).

Belongs to the CRISP family. In terms of tissue distribution, expressed by the venom gland.

It localises to the secreted. Blocks contraction of smooth muscle elicited by high potassium-induced depolarization, but does not block caffeine-stimulated contraction. May target voltage-gated calcium channels on smooth muscle. In Protobothrops jerdonii (Jerdon's pitviper), this protein is Cysteine-rich venom protein.